The primary structure comprises 466 residues: Asparagine--tRNA ligase (466 aa).

Belongs to the class-II aminoacyl-tRNA synthetase family. Homodimer.

The protein resides in the cytoplasm. It carries out the reaction tRNA(Asn) + L-asparagine + ATP = L-asparaginyl-tRNA(Asn) + AMP + diphosphate + H(+). The sequence is that of Asparagine--tRNA ligase from Serratia proteamaculans (strain 568).